A 192-amino-acid polypeptide reads, in one-letter code: Anthranilate synthase component 2 (192 aa).

In terms of domain architecture, Glutamine amidotransferase type-1 spans 1-192; sequence MIVLVNNRDS…KNFVEMSRNG (192 aa). Position 50–52 (50–52) interacts with L-glutamine; it reads GPG. The active-site Nucleophile; for GATase activity is C78. L-glutamine is bound by residues Q82 and 127–128; that span reads SL. Residues H165 and E167 each act as for GATase activity in the active site.

In terms of assembly, heterotetramer consisting of two non-identical subunits: a beta subunit (TrpG) and a large alpha subunit (TrpE).

It carries out the reaction chorismate + L-glutamine = anthranilate + pyruvate + L-glutamate + H(+). The protein operates within amino-acid biosynthesis; L-tryptophan biosynthesis; L-tryptophan from chorismate: step 1/5. Functionally, part of a heterotetrameric complex that catalyzes the two-step biosynthesis of anthranilate, an intermediate in the biosynthesis of L-tryptophan. In the first step, the glutamine-binding beta subunit (TrpG) of anthranilate synthase (AS) provides the glutamine amidotransferase activity which generates ammonia as a substrate that, along with chorismate, is used in the second step, catalyzed by the large alpha subunit of AS (TrpE) to produce anthranilate. In the absence of TrpG, TrpE can synthesize anthranilate directly from chorismate and high concentrations of ammonia. The protein is Anthranilate synthase component 2 (trpG) of Thermococcus kodakarensis (strain ATCC BAA-918 / JCM 12380 / KOD1) (Pyrococcus kodakaraensis (strain KOD1)).